The following is a 275-amino-acid chain: 2,3,4,5-tetrahydropyridine-2,6-dicarboxylate N-succinyltransferase (275 aa).

Positions 104 and 141 each coordinate substrate.

It belongs to the transferase hexapeptide repeat family. In terms of assembly, homotrimer.

It localises to the cytoplasm. The enzyme catalyses (S)-2,3,4,5-tetrahydrodipicolinate + succinyl-CoA + H2O = (S)-2-succinylamino-6-oxoheptanedioate + CoA. Its pathway is amino-acid biosynthesis; L-lysine biosynthesis via DAP pathway; LL-2,6-diaminopimelate from (S)-tetrahydrodipicolinate (succinylase route): step 1/3. The protein is 2,3,4,5-tetrahydropyridine-2,6-dicarboxylate N-succinyltransferase of Haemophilus influenzae (strain PittEE).